Here is a 439-residue protein sequence, read N- to C-terminus: Glycosyl hydrolase DigH (439 aa).

An N-terminal signal peptide occupies residues 1–27 (MDICSRNEKLAIRRPAILVALALLLCS). The N-palmitoyl cysteine moiety is linked to residue Cys-28. Cys-28 carries S-diacylglycerol cysteine lipidation. A disordered region spans residues 34 to 54 (ESMVTPPAGSKPPATTQQSSQ).

This sequence belongs to the glycosyl hydrolase-like 10 (GHL10) family.

It localises to the cell outer membrane. Functionally, divisome-localized glycosyl hydrolase that cleaves peptide-free (denuded) peptidoglycans. This Escherichia coli O6:H1 (strain CFT073 / ATCC 700928 / UPEC) protein is Glycosyl hydrolase DigH.